The following is a 323-amino-acid chain: Lipoyl synthase (323 aa).

[4Fe-4S] cluster-binding residues include cysteine 65, cysteine 70, cysteine 76, cysteine 91, cysteine 95, cysteine 98, and serine 304. Residues 77–293 (FNNGTATFMI…KKEALSIGFT (217 aa)) enclose the Radical SAM core domain.

This sequence belongs to the radical SAM superfamily. Lipoyl synthase family. [4Fe-4S] cluster is required as a cofactor.

It localises to the cytoplasm. It catalyses the reaction [[Fe-S] cluster scaffold protein carrying a second [4Fe-4S](2+) cluster] + N(6)-octanoyl-L-lysyl-[protein] + 2 oxidized [2Fe-2S]-[ferredoxin] + 2 S-adenosyl-L-methionine + 4 H(+) = [[Fe-S] cluster scaffold protein] + N(6)-[(R)-dihydrolipoyl]-L-lysyl-[protein] + 4 Fe(3+) + 2 hydrogen sulfide + 2 5'-deoxyadenosine + 2 L-methionine + 2 reduced [2Fe-2S]-[ferredoxin]. Its pathway is protein modification; protein lipoylation via endogenous pathway; protein N(6)-(lipoyl)lysine from octanoyl-[acyl-carrier-protein]: step 2/2. Catalyzes the radical-mediated insertion of two sulfur atoms into the C-6 and C-8 positions of the octanoyl moiety bound to the lipoyl domains of lipoate-dependent enzymes, thereby converting the octanoylated domains into lipoylated derivatives. The polypeptide is Lipoyl synthase (Buchnera aphidicola subsp. Acyrthosiphon pisum (strain APS) (Acyrthosiphon pisum symbiotic bacterium)).